A 427-amino-acid polypeptide reads, in one-letter code: WD repeat and SOCS box-containing protein 1 (427 aa).

WD repeat units follow at residues 129-170 (SRSI…LLLN), 173-213 (DHTD…NMVK), 217-256 (GHPN…LIRK), 259-298 (GHHN…ILLE), and 314-353 (ANDR…PQAV). Residues 379–427 (SVHFWECPRSIASLQHLCRMALRRVKTTQQVEALPVPMPLRDFLTYRVV) form the SOCS box domain.

In terms of assembly, component of a probable ECS E3 ubiquitin-protein ligase complex that contains the Elongin BC complex.

The protein operates within protein modification; protein ubiquitination. Probable substrate-recognition component of a SCF-like ECS (Elongin-Cullin-SOCS-box protein) E3 ubiquitin-protein ligase complex which mediates the ubiquitination and subsequent proteasomal degradation of target proteins. This Takifugu rubripes (Japanese pufferfish) protein is WD repeat and SOCS box-containing protein 1 (wsb1).